A 237-amino-acid chain; its full sequence is Phosphatidylserine decarboxylase proenzyme (237 aa).

Ser206 (schiff-base intermediate with substrate; via pyruvic acid) is an active-site residue. Ser206 is modified (pyruvic acid (Ser); by autocatalysis).

Belongs to the phosphatidylserine decarboxylase family. PSD-A subfamily. As to quaternary structure, heterodimer of a large membrane-associated beta subunit and a small pyruvoyl-containing alpha subunit. Pyruvate is required as a cofactor. Post-translationally, is synthesized initially as an inactive proenzyme. Formation of the active enzyme involves a self-maturation process in which the active site pyruvoyl group is generated from an internal serine residue via an autocatalytic post-translational modification. Two non-identical subunits are generated from the proenzyme in this reaction, and the pyruvate is formed at the N-terminus of the alpha chain, which is derived from the carboxyl end of the proenzyme. The post-translation cleavage follows an unusual pathway, termed non-hydrolytic serinolysis, in which the side chain hydroxyl group of the serine supplies its oxygen atom to form the C-terminus of the beta chain, while the remainder of the serine residue undergoes an oxidative deamination to produce ammonia and the pyruvoyl prosthetic group on the alpha chain.

The protein resides in the cell membrane. The enzyme catalyses a 1,2-diacyl-sn-glycero-3-phospho-L-serine + H(+) = a 1,2-diacyl-sn-glycero-3-phosphoethanolamine + CO2. Its pathway is phospholipid metabolism; phosphatidylethanolamine biosynthesis; phosphatidylethanolamine from CDP-diacylglycerol: step 2/2. Catalyzes the formation of phosphatidylethanolamine (PtdEtn) from phosphatidylserine (PtdSer). In Mycobacteroides abscessus (strain ATCC 19977 / DSM 44196 / CCUG 20993 / CIP 104536 / JCM 13569 / NCTC 13031 / TMC 1543 / L948) (Mycobacterium abscessus), this protein is Phosphatidylserine decarboxylase proenzyme.